Reading from the N-terminus, the 138-residue chain is Transcription antitermination protein NusB (138 aa).

The protein belongs to the NusB family.

In terms of biological role, involved in transcription antitermination. Required for transcription of ribosomal RNA (rRNA) genes. Binds specifically to the boxA antiterminator sequence of the ribosomal RNA (rrn) operons. The protein is Transcription antitermination protein NusB of Helicobacter acinonychis (strain Sheeba).